A 104-amino-acid polypeptide reads, in one-letter code: Large ribosomal subunit protein bL21 (104 aa).

Belongs to the bacterial ribosomal protein bL21 family. Part of the 50S ribosomal subunit. Contacts protein L20.

This protein binds to 23S rRNA in the presence of protein L20. This is Large ribosomal subunit protein bL21 from Alkalilimnicola ehrlichii (strain ATCC BAA-1101 / DSM 17681 / MLHE-1).